The following is a 1142-amino-acid chain: DNA-directed RNA polymerase subunit beta N-terminal section (1142 aa).

This sequence belongs to the RNA polymerase beta chain family. In terms of assembly, in plastids the minimal PEP RNA polymerase catalytic core is composed of four subunits: alpha, beta, beta', and beta''. When a (nuclear-encoded) sigma factor is associated with the core the holoenzyme is formed, which can initiate transcription.

The protein resides in the plastid. Its subcellular location is the chloroplast. The catalysed reaction is RNA(n) + a ribonucleoside 5'-triphosphate = RNA(n+1) + diphosphate. In terms of biological role, DNA-dependent RNA polymerase catalyzes the transcription of DNA into RNA using the four ribonucleoside triphosphates as substrates. This Pleurastrum terricola (Filamentous green alga) protein is DNA-directed RNA polymerase subunit beta N-terminal section (rpoB1).